The sequence spans 244 residues: Phosphoadenosine 5'-phosphosulfate reductase (244 aa).

Cys239 acts as the Nucleophile; cysteine thiosulfonate intermediate in catalysis.

The protein belongs to the PAPS reductase family. CysH subfamily.

It localises to the cytoplasm. The enzyme catalyses [thioredoxin]-disulfide + sulfite + adenosine 3',5'-bisphosphate + 2 H(+) = [thioredoxin]-dithiol + 3'-phosphoadenylyl sulfate. It functions in the pathway sulfur metabolism; hydrogen sulfide biosynthesis; sulfite from sulfate: step 3/3. In terms of biological role, catalyzes the formation of sulfite from phosphoadenosine 5'-phosphosulfate (PAPS) using thioredoxin as an electron donor. This chain is Phosphoadenosine 5'-phosphosulfate reductase, found in Shigella flexneri.